The chain runs to 857 residues: MAHTSNHLFILLLLISVYGFLGHKKNYVTVFYGIPAWRNATVPLFCATTNRDTWGTVQCLPDNGDYTEISVNITEAFDAWNNTVTEQAVDDVWSLFETSIKPCVKLTPLCVAMRCNNTGTNTTTKPITTPITTTKPSENLLNDTSPCIKNDTCPGIGLENTVDCYFNMTGLRRDEKKQYKDTWYEKDLECNGNSTSTICYMRTCNTSVIQESCDKHYWDSLRFRYCAPPGYALLRCNDTNYSGFMPKCSKVVVSSCTRMMETQTSTWFGFNGTRTENRTYMYWHSKDNRTIISLNKYYNLTMHCRRPGNKTVIPITIMSGLNFHSQPLNTRPRQAWCWFKGNWIEAIREVKETIIKHPRYKGTNNTERIRLVGPSAGSDPEVRHMWTNCRGEFFYCNMTWFLNWVENRTGTTQKNYVTCHIKQIVNTWHKVGKYVYLPPREGTLSCNSSVTSLIANIDVYYDGNDTKTNITMSAEVGELYRLELGDYKLVEITPIGFAPTEIKRYSSTTPRNKRGVMVLGFLGLLAMAGSAMGATSLTLSAQSRTLLAGIVQQQQQLLDVVKRQQELLRLTVWGTKNLQTRVTAIEKYLKDQALLNSWGCAFRQVCHTTVPWPNETLTPDWENMTWQQWEKRVNFLDANITALLEEAQIQQERNMYELQKLNSWDVFGNWFDFTSWMAYIRLGLYVVAGLIVLRIVIYIMQMLARLRKGYRPVFSSPPSYTQQIPIRKHRGQPANEETEDEGGNEGAYRSWPWQIEYAHFLIRQLRNLLIWLYNGCRNLLLKTSQILQPALQPLRLSLAYLQYGISWFQEAIQAATRAARETLANTGRALWKALRRTAEAIIAIPRRIRQGLELALL.

The signal sequence occupies residues 1–26; the sequence is MAHTSNHLFILLLLISVYGFLGHKKN. Over 27 to 682 the chain is Extracellular; sequence YVTVFYGIPA…FTSWMAYIRL (656 aa). An N-linked (GlcNAc...) asparagine; by host glycan is attached at asparagine 39. A disulfide bridge connects residues cysteine 46 and cysteine 59. Asparagine 72, asparagine 81, asparagine 116, asparagine 121, asparagine 142, asparagine 150, asparagine 167, asparagine 193, asparagine 205, asparagine 237, asparagine 240, asparagine 271, asparagine 277, asparagine 288, asparagine 299, asparagine 309, asparagine 364, asparagine 397, asparagine 407, asparagine 447, asparagine 464, and asparagine 469 each carry an N-linked (GlcNAc...) asparagine; by host glycan. Cystine bridges form between cysteine 103–cysteine 213, cysteine 110–cysteine 204, cysteine 115–cysteine 164, cysteine 226–cysteine 256, and cysteine 236–cysteine 248. The V1 stretch occupies residues 115–163; sequence CNNTGTNTTTKPITTPITTTKPSENLLNDTSPCIKNDTCPGIGLENTVD. Positions 164–204 are V2; that stretch reads CYFNMTGLRRDEKKQYKDTWYEKDLECNGNSTSTICYMRTC. The segment at 304 to 336 is V3; sequence CRRPGNKTVIPITIMSGLNFHSQPLNTRPRQAW. Residues cysteine 304 and cysteine 337 are joined by a disulfide bond. Intrachain disulfides connect cysteine 389/cysteine 446 and cysteine 396/cysteine 419. The segment at 396-419 is V4; the sequence is CNMTWFLNWVENRTGTTQKNYVTC. The V5 stretch occupies residues 464–472; that stretch reads NDTKTNITM. A fusion peptide region spans residues 515–535; the sequence is GVMVLGFLGLLAMAGSAMGAT. The segment at 578–594 is immunosuppression; the sequence is LQTRVTAIEKYLKDQAL. Residues asparagine 614, asparagine 623, and asparagine 639 are each glycosylated (N-linked (GlcNAc...) asparagine; by host). A coiled-coil region spans residues 627–648; the sequence is QQWEKRVNFLDANITALLEEAQ. An MPER; binding to GalCer region spans residues 660-681; the sequence is KLNSWDVFGNWFDFTSWMAYIR. Residues 683 to 703 traverse the membrane as a helical segment; the sequence is GLYVVAGLIVLRIVIYIMQML. Residues 704-857 lie on the Cytoplasmic side of the membrane; sequence ARLRKGYRPV…IRQGLELALL (154 aa). The YXXV motif; contains endocytosis signal motif lies at 710 to 713; sequence YRPV. Residue cysteine 776 is the site of S-palmitoyl cysteine; by host attachment. Residues 856–857 carry the Di-leucine internalization motif motif; the sequence is LL.

In terms of assembly, the mature envelope protein (Env) consists of a homotrimer of non-covalently associated gp120-gp41 heterodimers. The resulting complex protrudes from the virus surface as a spike. There seems to be as few as 10 spikes on the average virion. Interacts with human CD4, CCR5 and CXCR4, to form a P4HB/PDI-CD4-CXCR4-gp120 complex. Gp120 also interacts with the C-type lectins CD209/DC-SIGN and CLEC4M/DC-SIGNR (collectively referred to as DC-SIGN(R)). Gp120 and gp41 interact with GalCer. As to quaternary structure, the mature envelope protein (Env) consists of a homotrimer of non-covalently associated gp120-gp41 heterodimers. The resulting complex protrudes from the virus surface as a spike. There seems to be as few as 10 spikes on the average virion. In terms of processing, specific enzymatic cleavages in vivo yield mature proteins. Envelope glycoproteins are synthesized as an inactive precursor that is heavily N-glycosylated and processed likely by host cell furin in the Golgi to yield the mature SU and TM proteins. The cleavage site between SU and TM requires the minimal sequence [KR]-X-[KR]-R. Palmitoylation of the transmembrane protein and of Env polyprotein (prior to its proteolytic cleavage) is essential for their association with host cell membrane lipid rafts. Palmitoylation is therefore required for envelope trafficking to classical lipid rafts, but not for viral replication.

The protein resides in the virion membrane. Its subcellular location is the host cell membrane. It localises to the host endosome membrane. In terms of biological role, the surface protein gp120 (SU) attaches the virus to the host lymphoid cell by binding to the primary receptor CD4. This interaction induces a structural rearrangement creating a high affinity binding site for a chemokine coreceptor like CXCR4 and/or CCR5. This peculiar 2 stage receptor-interaction strategy allows gp120 to maintain the highly conserved coreceptor-binding site in a cryptic conformation, protected from neutralizing antibodies. Since CD4 also displays a binding site for the disulfide-isomerase P4HB/PDI, a P4HB/PDI-CD4-CXCR4-gp120 complex may form. In that complex, P4HB/PDI could reach and reduce gp120 disulfide bonds, causing major conformational changes in gp120. TXN, another PDI family member could also be involved in disulfide rearrangements in Env during fusion. These changes are transmitted to the transmembrane protein gp41 and are thought to activate its fusogenic potential by unmasking its fusion peptide. Functionally, the surface protein gp120 is a ligand for CD209/DC-SIGN and CLEC4M/DC-SIGNR, which are respectively found on dendritic cells (DCs), and on endothelial cells of liver sinusoids and lymph node sinuses. These interactions allow capture of viral particles at mucosal surfaces by these cells and subsequent transmission to permissive cells. DCs are professional antigen presenting cells, critical for host immunity by inducing specific immune responses against a broad variety of pathogens. They act as sentinels in various tissues where they take up antigen, process it, and present it to T-cells following migration to lymphoid organs. HIV subverts the migration properties of dendritic cells to gain access to CD4+ T-cells in lymph nodes. Virus transmission to permissive T-cells occurs either in trans (without DCs infection, through viral capture and transmission), or in cis (following DCs productive infection, through the usual CD4-gp120 interaction), thereby inducing a robust infection. In trans infection, bound virions remain infectious over days and it is proposed that they are not degraded, but protected in non-lysosomal acidic organelles within the DCs close to the cell membrane thus contributing to the viral infectious potential during DCs' migration from the periphery to the lymphoid tissues. On arrival at lymphoid tissues, intact virions recycle back to DCs' cell surface allowing virus transmission to CD4+ T-cells. Virion capture also seems to lead to MHC-II-restricted viral antigen presentation, and probably to the activation of HIV-specific CD4+ cells. The transmembrane protein gp41 (TM) acts as a class I viral fusion protein. Under the current model, the protein has at least 3 conformational states: pre-fusion native state, pre-hairpin intermediate state, and post-fusion hairpin state. During fusion of viral and target intracellular membranes, the coiled coil regions (heptad repeats) assume a trimer-of-hairpins structure, positioning the fusion peptide in close proximity to the C-terminal region of the ectodomain. The formation of this structure appears to drive apposition and subsequent fusion of viral and target cell membranes. Complete fusion occurs in host cell endosomes and is dynamin-dependent, however some lipid transfer might occur at the plasma membrane. The virus undergoes clathrin-dependent internalization long before endosomal fusion, thus minimizing the surface exposure of conserved viral epitopes during fusion and reducing the efficacy of inhibitors targeting these epitopes. Membranes fusion leads to delivery of the nucleocapsid into the cytoplasm. Its function is as follows. The envelope glycoprotein gp160 precursor down-modulates cell surface CD4 antigen by interacting with it in the endoplasmic reticulum and blocking its transport to the cell surface. In terms of biological role, the gp120-gp41 heterodimer seems to contribute to T-cell depletion during HIV-1 infection. The envelope glycoproteins expressed on the surface of infected cells induce apoptosis through an interaction with uninfected cells expressing the receptor (CD4) and the coreceptors CXCR4 or CCR5. This type of bystander killing may be obtained by at least three distinct mechanisms. First, the interaction between the 2 cells can induce cellular fusion followed by nuclear fusion within the syncytium. Syncytia are condemned to die from apoptosis. Second, the 2 interacting cells may not fuse entirely and simply exchange plasma membrane lipids, after a sort of hemifusion process, followed by rapid death. Third, it is possible that virus-infected cells, on the point of undergoing apoptosis, fuse with CD4-expressing cells, in which case apoptosis is rapidly transmitted from one cell to the other and thus occurs in a sort of contagious fashion. Functionally, the gp120-gp41 heterodimer allows rapid transcytosis of the virus through CD4 negative cells such as simple epithelial monolayers of the intestinal, rectal and endocervical epithelial barriers. Both gp120 and gp41 specifically recognize glycosphingolipids galactosyl-ceramide (GalCer) or 3' sulfo-galactosyl-ceramide (GalS) present in the lipid rafts structures of epithelial cells. Binding to these alternative receptors allows the rapid transcytosis of the virus through the epithelial cells. This transcytotic vesicle-mediated transport of virions from the apical side to the basolateral side of the epithelial cells does not involve infection of the cells themselves. This is Envelope glycoprotein gp160 (env) from Homo sapiens (Human).